The following is a 1221-amino-acid chain: Probable serine/threonine-protein kinase DDB_G0286465 (1221 aa).

Disordered stretches follow at residues 1–37, 104–133, and 173–263; these read MTLRLDTSLKRGASRNIPPIPTFSSVSNENLSSSPYT, FSPSTGRTKNNNNNNNNNINNNNYKKNDNQ, and ENNS…NNNE. Low complexity-rich tracts occupy residues 24–37, 112–127, 173–192, and 204–263; these read SSVSNENLSSSPYT, KNNNNNNNNNINNNNY, ENNSQNNNNNKYQINNNMQK, and NNNN…NNNE. A Protein kinase domain is found at 186 to 627; it reads INNNMQKTGG…PYKLLDHPFF (442 aa). Residue 192-200 coordinates ATP; it reads KTGGRNGSV. Lys-271 lines the ATP pocket. Positions 324-344 are enriched in low complexity; it reads NVNNNNSNNNNNNSNNNITNS. The segment at 324–346 is disordered; sequence NVNNNNSNNNNNNSNNNITNSRY. Asp-448 acts as the Proton acceptor in catalysis. Composition is skewed to low complexity over residues 538 to 550 and 559 to 584; these read SPSSSSTTSTSTS and DSSSSASSSSSSSSSSSSSSSSSLPK. 5 disordered regions span residues 538–604, 712–782, 823–858, 959–1008, and 1105–1152; these read SPSS…PEKR, PNLS…KEKL, KFEKKQRQIQDSEKVNKNEEENQTKDDADNISPPLP, KENI…SYCN, and KKQE…QQEK. The segment covering 591-604 has biased composition (basic and acidic residues); it reads RSKDNQSKLDPEKR. Low complexity predominate over residues 725–738; sequence KKQLQQYQQQQKQQ. Positions 746–756 are enriched in acidic residues; that stretch reads DDEEEKEEEEK. 2 stretches are compositionally biased toward basic and acidic residues: residues 757-769 and 823-850; these read EKEKEKEKEKEKE and KFEKKQRQIQDSEKVNKNEEENQTKDDA. A compositionally biased stretch (low complexity) spans 959 to 993; it reads KENIINFHNNNNNNNNNNNNNNNNNNNNNNNNNNN.

This sequence belongs to the protein kinase superfamily. Ser/Thr protein kinase family.

The enzyme catalyses L-seryl-[protein] + ATP = O-phospho-L-seryl-[protein] + ADP + H(+). The catalysed reaction is L-threonyl-[protein] + ATP = O-phospho-L-threonyl-[protein] + ADP + H(+). This is Probable serine/threonine-protein kinase DDB_G0286465 from Dictyostelium discoideum (Social amoeba).